Consider the following 122-residue polypeptide: Large ribosomal subunit protein uL14c (122 aa).

This sequence belongs to the universal ribosomal protein uL14 family. Part of the 50S ribosomal subunit.

Its subcellular location is the plastid. It is found in the chloroplast. Binds to 23S rRNA. In Lactuca sativa (Garden lettuce), this protein is Large ribosomal subunit protein uL14c.